The primary structure comprises 504 residues: Signal transduction histidine-protein kinase/phosphatase MprB (504 aa).

Residues Met1–Leu26 lie on the Cytoplasmic side of the membrane. The helical transmembrane segment at Leu27 to Ile47 threads the bilayer. The Extracellular segment spans residues Ser48 to Arg163. A helical transmembrane segment spans residues Trp164–Val184. The Cytoplasmic segment spans residues Thr185 to Thr504. The HAMP domain maps to Arg186 to Glu238. The Histidine kinase domain maps to Asp246–Arg466. His249 bears the Phosphohistidine; by autocatalysis mark. The disordered stretch occupies residues Gln471–Thr504. Polar residues predominate over residues Ser487–Thr504.

It depends on Mg(2+) as a cofactor. The cofactor is Mn(2+). Post-translationally, autophosphorylated.

The protein localises to the cell membrane. The enzyme catalyses ATP + protein L-histidine = ADP + protein N-phospho-L-histidine.. Its function is as follows. Member of the two-component regulatory system MprB/MprA which contributes to maintaining a balance among several systems involved in stress resistance and is required for establishment and maintenance of persistent infection in the host. In response to environmental signals MprB acts both as a membrane-associated protein kinase that undergoes autophosphorylation and subsequently transfers the phosphate to MprA, and a protein phosphatase that dephosphorylates phospho-MprA. This chain is Signal transduction histidine-protein kinase/phosphatase MprB (mprB), found in Mycobacterium tuberculosis (strain ATCC 25177 / H37Ra).